The chain runs to 130 residues: Small ribosomal subunit protein uS9 (130 aa).

This sequence belongs to the universal ribosomal protein uS9 family.

The polypeptide is Small ribosomal subunit protein uS9 (Vibrio campbellii (strain ATCC BAA-1116)).